The primary structure comprises 115 residues: Hydrogenase maturation factor HypA (115 aa).

Ni(2+) is bound at residue H2. Zn(2+) is bound by residues C74, C77, C90, and C93.

Belongs to the HypA/HybF family.

In terms of biological role, involved in the maturation of [NiFe] hydrogenases. Required for nickel insertion into the metal center of the hydrogenase. The chain is Hydrogenase maturation factor HypA from Desulfosudis oleivorans (strain DSM 6200 / JCM 39069 / Hxd3) (Desulfococcus oleovorans).